The following is a 295-amino-acid chain: UDP-N-acetylenolpyruvoylglucosamine reductase (295 aa).

The FAD-binding PCMH-type domain occupies K24–G188. Residue R168 is part of the active site. The active-site Proton donor is the S217. E287 is an active-site residue.

It belongs to the MurB family. FAD serves as cofactor.

The protein localises to the cytoplasm. It carries out the reaction UDP-N-acetyl-alpha-D-muramate + NADP(+) = UDP-N-acetyl-3-O-(1-carboxyvinyl)-alpha-D-glucosamine + NADPH + H(+). It functions in the pathway cell wall biogenesis; peptidoglycan biosynthesis. Its function is as follows. Cell wall formation. In Rickettsia massiliae (strain Mtu5), this protein is UDP-N-acetylenolpyruvoylglucosamine reductase.